The following is a 92-amino-acid chain: Large ribosomal subunit protein bL25 (92 aa).

The protein belongs to the bacterial ribosomal protein bL25 family. As to quaternary structure, part of the 50S ribosomal subunit; part of the 5S rRNA/L5/L18/L25 subcomplex. Contacts the 5S rRNA. Binds to the 5S rRNA independently of L5 and L18.

Functionally, this is one of the proteins that binds to the 5S RNA in the ribosome where it forms part of the central protuberance. In Photobacterium damsela subsp. piscicida (Pasteurella piscicida), this protein is Large ribosomal subunit protein bL25.